The primary structure comprises 242 residues: UPF0246 protein SPH_1662 (242 aa).

The protein belongs to the UPF0246 family.

This is UPF0246 protein SPH_1662 from Streptococcus pneumoniae (strain Hungary19A-6).